A 2126-amino-acid chain; its full sequence is Phthioceranic/hydroxyphthioceranic acid synthase (2126 aa).

Residues 24-447 form the Ketosynthase family 3 (KS3) domain; it reads VTPVAVIGMA…GTNVHAVVEQ (424 aa). The active-site Acyl-thioester intermediate; for beta-ketoacyl synthase activity is Cys-196. Active-site for beta-ketoacyl synthase activity residues include His-331 and His-367. The linker domain (LD) stretch occupies residues 449–549; the sequence is PQTEAQPHAA…VYQPAVGQDD (101 aa). The interval 550–849 is acyltransferase (AT); sequence RGPVWLFSGQ…VAALAGMRRE (300 aa). Ser-641 (acyl-ester intermediate; for acyltransferase activity) is an active-site residue. Residues 909–1191 form a dehydratase (DH) region; it reads STVAVHPLLG…LAVCGLRIGT (283 aa). The N-terminal hotdog fold stretch occupies residues 914 to 1032; sequence HPLLGAHVRL…RRASAVLQQV (119 aa). One can recognise a PKS/mFAS DH domain in the interval 914-1198; that stretch reads HPLLGAHVRL…IGTGVSERDK (285 aa). His-947 functions as the Proton acceptor; for dehydratase activity in the catalytic mechanism. Residues 1051–1198 are C-terminal hotdog fold; the sequence is PCRVDGEDLR…IGTGVSERDK (148 aa). The Proton donor; for dehydratase activity role is filled by Asp-1115. Residues 1227-1398 form a pseudo beta-ketoacyl reductase (PsiKR) region; sequence KWLLISDCAA…SEEDETAWRD (172 aa). The tract at residues 1426–1750 is enoylreductase (ER); it reads SGMRLQIRTP…EHTGKLVLHI (325 aa). The tract at residues 1772–2019 is beta-ketoacyl reductase (KR); it reads GSYIITGGLG…AERSRFFEVF (248 aa). NADP(+) contacts are provided by residues 1780 to 1783, 1803 to 1806, 1831 to 1832, and 1904 to 1905; these read LGGL, SRTQ, DI, and FS. In terms of domain architecture, Carrier spans 2040 to 2126; the sequence is DEWPARLRQL…DAPAAALSSQ (87 aa). Residue Ser-2075 is modified to O-(pantetheine 4'-phosphoryl)serine.

Pantetheine 4'-phosphate is required as a cofactor.

It catalyses the reaction hexadecanoyl-[(hydroxy)phthioceranic acid synthase] + 7 (S)-methylmalonyl-CoA + 14 NADPH + 21 H(+) = C37-phthioceranyl-[(hydroxy)phthioceranic acid synthase] + 7 CO2 + 14 NADP(+) + 7 CoA + 7 H2O. The enzyme catalyses hexadecanoyl-[(hydroxy)phthioceranic acid synthase] + 8 (S)-methylmalonyl-CoA + 16 NADPH + 24 H(+) = C40-phthioceranyl-[(hydroxy)phthioceranic acid synthase] + 8 CO2 + 16 NADP(+) + 8 CoA + 8 H2O. In Mycobacterium bovis (strain BCG / Pasteur 1173P2), this protein is Phthioceranic/hydroxyphthioceranic acid synthase (pks2).